The primary structure comprises 119 residues: Large ribosomal subunit protein uL18 (119 aa).

It belongs to the universal ribosomal protein uL18 family. Part of the 50S ribosomal subunit; part of the 5S rRNA/L5/L18/L25 subcomplex. Contacts the 5S and 23S rRNAs.

Functionally, this is one of the proteins that bind and probably mediate the attachment of the 5S RNA into the large ribosomal subunit, where it forms part of the central protuberance. This chain is Large ribosomal subunit protein uL18, found in Cupriavidus metallidurans (strain ATCC 43123 / DSM 2839 / NBRC 102507 / CH34) (Ralstonia metallidurans).